Consider the following 427-residue polypeptide: UDP-N-acetylglucosamine 1-carboxyvinyltransferase 1 (427 aa).

Residue 23–24 participates in phosphoenolpyruvate binding; it reads KN. Arginine 96 is a UDP-N-acetyl-alpha-D-glucosamine binding site. Cysteine 120 functions as the Proton donor in the catalytic mechanism. Position 120 is a 2-(S-cysteinyl)pyruvic acid O-phosphothioketal (cysteine 120). Residues 125–129, aspartate 309, and valine 331 contribute to the UDP-N-acetyl-alpha-D-glucosamine site; that span reads RPIDL.

The protein belongs to the EPSP synthase family. MurA subfamily.

The protein localises to the cytoplasm. The enzyme catalyses phosphoenolpyruvate + UDP-N-acetyl-alpha-D-glucosamine = UDP-N-acetyl-3-O-(1-carboxyvinyl)-alpha-D-glucosamine + phosphate. Its pathway is cell wall biogenesis; peptidoglycan biosynthesis. Functionally, cell wall formation. Adds enolpyruvyl to UDP-N-acetylglucosamine. This Streptococcus pneumoniae (strain ATCC BAA-255 / R6) protein is UDP-N-acetylglucosamine 1-carboxyvinyltransferase 1.